Reading from the N-terminus, the 237-residue chain is Concanavalin-A (237 aa).

Residues Glu8 and Asp10 each coordinate Mn(2+). Positions 10, 12, 14, and 19 each coordinate Ca(2+). Tyr12 is a binding site for a carbohydrate. Mn(2+)-binding residues include Asp19 and His24. Leu99 to Tyr100 lines the a carbohydrate pocket. Residue Asp208 coordinates Ca(2+). Residue Arg228 participates in a carbohydrate binding.

Belongs to the leguminous lectin family. As to quaternary structure, homotetramer.

In terms of biological role, glucose/D-mannose specific lectin. The chain is Concanavalin-A from Canavalia lineata (Beach bean).